Consider the following 607-residue polypeptide: Glycerophosphodiester phosphodiesterase domain-containing protein 5 (607 aa).

The Cytoplasmic segment spans residues 1–42; it reads MVRHQPLQYYEPQLCLSCLTGIYGCRWKRYQRSHDDTTPWER. Cystine bridges form between C15-C18 and C25-C571. A helical transmembrane segment spans residues 43-63; it reads LWFLLLVCTFSLTLTWLYFWW. Residues 64-89 lie on the Extracellular side of the membrane; that stretch reads GVHNDYDEFNWYLYNRMGYWSDWSVP. Residues 90-110 form a helical membrane-spanning segment; it reads ILVTSAAAFTYIAGLLVLALC. Topologically, residues 111-125 are cytoplasmic; sequence HIAVGQQLNLHWIHK. Residues 126-146 form a helical membrane-spanning segment; sequence MGLVVILASTVVAMSAVAQLW. The Extracellular segment spans residues 147-160; it reads EDEWEVLLISLQGT. The chain crosses the membrane as a helical span at residues 161–181; that stretch reads APFLHIGALVAITALSWIVAG. Topologically, residues 182–192 are cytoplasmic; that stretch reads QFARAERSSSQ. The helical transmembrane segment at 193 to 213 threads the bilayer; it reads LTILCTFFAVVFTFYLIPLTI. Residues 214–496 are Extracellular-facing; sequence SSPCIMEKKD…PLWIMPPDEY (283 aa). The region spanning 228–485 is the GP-PDE domain; the sequence is PALIGHRGAP…DNSHTLSRVP (258 aa). N-linked (GlcNAc...) asparagine glycans are attached at residues N301, N336, N352, N374, and N448. The chain crosses the membrane as a helical span at residues 497 to 517; it reads CLMWVTADLISFSLIIGIFVL. At 518–607 the chain is on the cytoplasmic side; sequence QKWRLGGIRS…AKTVTEQSGH (90 aa). The tract at residues 582–607 is disordered; that stretch reads ANSTATPVGPRNAGSRAKTVTEQSGH.

The protein belongs to the glycerophosphoryl diester phosphodiesterase family. As to quaternary structure, interacts with PRDX1; forms a mixed-disulfide with PRDX1, leading to disrupt intramolecular disulfide bond between Cys-25 and Cys-571. In terms of processing, intramolecular disulfide bond between Cys-25 and Cys-571 is reduced by PRDX1. As to expression, detected in brain, lung, heart, kidney and testis.

The protein resides in the endomembrane system. It is found in the cytoplasm. The protein localises to the perinuclear region. It localises to the cell projection. Its subcellular location is the growth cone. It carries out the reaction a 1,2-diacyl-sn-glycero-3-phospho-(1D-myo-inositol-4,5-bisphosphate) + H2O = 1D-myo-inositol 1,4,5-trisphosphate + a 1,2-diacyl-sn-glycerol + H(+). It catalyses the reaction sn-glycerol 3-phosphocholine + H2O = sn-glycerol 3-phosphate + choline + H(+). Its activity is regulated as follows. Inhibited by high level of NaCl or urea. Functionally, glycerophosphodiester phosphodiesterase that promotes neurite formation and drives spinal motor neuron differentiation. Mediates the cleavage of glycosylphosphatidylinositol (GPI) anchor of target proteins: removes the GPI-anchor of RECK, leading to release RECK from the plasma membrane. May contribute to the osmotic regulation of cellular glycerophosphocholine. In Mus musculus (Mouse), this protein is Glycerophosphodiester phosphodiesterase domain-containing protein 5.